Reading from the N-terminus, the 264-residue chain is Small ribosomal subunit protein eS1 (264 aa).

The segment at 232–264 (HGEGGGSGKPSGDETGAKVERADGYEPPVQESV) is disordered. A compositionally biased stretch (basic and acidic residues) spans 242 to 255 (SGDETGAKVERADG).

The protein belongs to the eukaryotic ribosomal protein eS1 family. As to quaternary structure, component of the small ribosomal subunit. Mature ribosomes consist of a small (40S) and a large (60S) subunit. The 40S subunit contains about 33 different proteins and 1 molecule of RNA (18S). The 60S subunit contains about 49 different proteins and 3 molecules of RNA (28S, 5.8S and 5S). Part of the small subunit (SSU) processome, composed of more than 70 proteins and the RNA chaperone small nucleolar RNA (snoRNA) U3.

The protein resides in the cytoplasm. Its subcellular location is the nucleus. The protein localises to the nucleolus. Component of the small ribosomal subunit. The ribosome is a large ribonucleoprotein complex responsible for the synthesis of proteins in the cell. Part of the small subunit (SSU) processome, first precursor of the small eukaryotic ribosomal subunit. During the assembly of the SSU processome in the nucleolus, many ribosome biogenesis factors, an RNA chaperone and ribosomal proteins associate with the nascent pre-rRNA and work in concert to generate RNA folding, modifications, rearrangements and cleavage as well as targeted degradation of pre-ribosomal RNA by the RNA exosome. May play a role during erythropoiesis. This is Small ribosomal subunit protein eS1 from Ophiophagus hannah (King cobra).